We begin with the raw amino-acid sequence, 64 residues long: Small ribosomal subunit protein eS17 (64 aa).

It belongs to the eukaryotic ribosomal protein eS17 family.

The polypeptide is Small ribosomal subunit protein eS17 (Methanosarcina mazei (strain ATCC BAA-159 / DSM 3647 / Goe1 / Go1 / JCM 11833 / OCM 88) (Methanosarcina frisia)).